The following is a 246-amino-acid chain: 14-3-3 protein beta/alpha (246 aa).

M1 is modified (N-acetylmethionine). T2 is subject to N-acetylthreonine; in 14-3-3 protein beta/alpha, N-terminally processed. T2 carries the post-translational modification Phosphothreonine. The residue at position 5 (K5) is an N6-acetyllysine. K51 is subject to N6-acetyllysine; alternate. K51 participates in a covalent cross-link: Glycyl lysine isopeptide (Lys-Gly) (interchain with G-Cter in SUMO2); alternate. Residue S60 is modified to Phosphoserine. K70 is subject to N6-acetyllysine. 3'-nitrotyrosine occurs at positions 84 and 106. K117 carries the N6-acetyllysine modification. S186 and S232 each carry phosphoserine.

The protein belongs to the 14-3-3 family. Homodimer. Interacts with SAMSN1 and PRKCE. Interacts with AKAP13. Interacts with SSH1 and TORC2/CRTC2. Interacts with ABL1; the interaction results in cytoplasmic location of ABL1 and inhibition of cABL-mediated apoptosis. Interacts with ROR2 (dimer); the interaction results in phosphorylation of YWHAB on tyrosine residues. Interacts with GAB2. Interacts with YAP1 (phosphorylated form). Interacts with the phosphorylated (by AKT1) form of SRPK2. Interacts with PKA-phosphorylated AANAT. Interacts with MYO1C. Interacts with SIRT2. Interacts with the 'Thr-369' phosphorylated form of DAPK2. Interacts with PI4KB, TBC1D22A and TBC1D22B. Interacts with the 'Ser-1134' and 'Ser-1161' phosphorylated form of SOS1. Interacts (via phosphorylated form) with YWHAB; this interaction occurs in a protein kinase AKT1-dependent manner. Interacts with SLITRK1. Interacts with SYNPO2 (phosphorylated form); YWHAB competes with ACTN2 for interaction with SYNPO2. Interacts with RIPOR2 (via phosphorylated form); this interaction occurs in a chemokine-dependent manner and does not compete for binding of RIPOR2 with RHOA nor blocks inhibition of RIPOR2-mediated RHOA activity. Interacts with MARK2 and MARK3. Interacts with TESK1; the interaction is dependent on the phosphorylation of TESK1 'Ser-439' and inhibits TESK1 kinase activity. Interacts with MEFV. Interacts with HDAC4. Interacts with ADAM22 (via C-terminus). The alpha, brain-specific form differs from the beta form in being phosphorylated. Phosphorylated on Ser-60 by protein kinase C delta type catalytic subunit in a sphingosine-dependent fashion.

Its subcellular location is the cytoplasm. The protein resides in the melanosome. Functionally, adapter protein implicated in the regulation of a large spectrum of both general and specialized signaling pathways. Binds to a large number of partners, usually by recognition of a phosphoserine or phosphothreonine motif. Binding generally results in the modulation of the activity of the binding partner. Negative regulator of osteogenesis. Blocks the nuclear translocation of the phosphorylated form (by AKT1) of SRPK2 and antagonizes its stimulatory effect on cyclin D1 expression resulting in blockage of neuronal apoptosis elicited by SRPK2. Negative regulator of signaling cascades that mediate activation of MAP kinases via AKAP13. This Bos taurus (Bovine) protein is 14-3-3 protein beta/alpha (YWHAB).